We begin with the raw amino-acid sequence, 275 residues long: Small ribosomal subunit protein uS2 (275 aa).

Positions 232–256 are disordered; that stretch reads ARATDGKPEPEPVPGQELGADEPLA.

This sequence belongs to the universal ribosomal protein uS2 family.

This is Small ribosomal subunit protein uS2 from Acidothermus cellulolyticus (strain ATCC 43068 / DSM 8971 / 11B).